The sequence spans 165 residues: Nucleotide-binding protein Ccon26_01810 (165 aa).

This sequence belongs to the YajQ family.

Its function is as follows. Nucleotide-binding protein. This chain is Nucleotide-binding protein Ccon26_01810, found in Campylobacter concisus (strain 13826).